A 188-amino-acid chain; its full sequence is MIKTVYVTGYKSFELNIFKDDAPEVSYLKKFIEHKLKQLIEEGLEWVLIQGQMGIELWTAEVVLALKATYPDLKLGIITPFYGHIDRWNEQNQAKYNHIAHHADFVDSVFHSSYEGPHQFKQTDQFMLAHSDTTLLIYDEEQEASPKFFKQMLVDFMEKTNYTCDIVTFDELTEFINDLQWSQEQSFE.

The protein belongs to the UPF0398 family.

This chain is UPF0398 protein SSP1297, found in Staphylococcus saprophyticus subsp. saprophyticus (strain ATCC 15305 / DSM 20229 / NCIMB 8711 / NCTC 7292 / S-41).